The chain runs to 379 residues: Multicilin (379 aa).

The interval 1–129 (MQACEGSAAG…AMDDLIADSS (129 aa)) is necessary and sufficient for its degradation during the cell cycle. Disordered stretches follow at residues 26–71 (SRRT…APLP) and 88–107 (LGTE…PSLQ). The span at 92–107 (ASPSGDSSASQNPSLQ) shows a compositional bias: polar residues. The segment at 130–379 (SLMSPPLTNS…GGYKFRWVPS (250 aa)) is necessary and sufficient for proper nuclear localization. A necessary and sufficient for interaction with GMNN and sufficient for homodimerization region spans residues 171–241 (PPPTEQYWKE…SVLDKLMITQ (71 aa)). A coiled-coil region spans residues 175–223 (EQYWKEVADQNQRALGTALIENNQLHVTLTQKQEEIASLRERNVQLKEL). The segment covering 291-309 (NRDPKRPRLQPEPDSKDCS) has biased composition (basic and acidic residues). The disordered stretch occupies residues 291-312 (NRDPKRPRLQPEPDSKDCSSRN).

This sequence belongs to the geminin family. As to quaternary structure, heterodimer (via coiled-coil domain) with GMNN (via coiled-coil domain); targets GMNN to the nucleus. Can form homodimers (in vitro, via coiled-coil domain), but these are much less stable than the heterodimer formed with GMNN.

It is found in the nucleus. Functionally, transcription regulator specifically required for multiciliate cell differentiation. Acts in a multiprotein complex containing E2F4 and E2F5 that binds and activates genes required for centriole biogenesis. Required for the deuterosome-mediated acentriolar pathway. Plays a role in mitotic cell cycle progression by promoting cell cycle exit. Modulates GMNN activity by reducing its affinity for CDT1. This Mus musculus (Mouse) protein is Multicilin (Mcidas).